Here is an 85-residue protein sequence, read N- to C-terminus: Dynein light chain 1, cytoplasmic (85 aa).

Belongs to the dynein light chain family. In terms of assembly, homodimer. Cytoplasmic dynein consists of two catalytic heavy chains (HCs) and a number of non-catalytic subunits which present intermediate chains (ICs), light intermediate chains (LICs) and light chains (LCs). Component of the nuclear pore complex (NPC). NPC constitutes the exclusive means of nucleocytoplasmic transport. NPCs allow the passive diffusion of ions and small molecules and the active, nuclear transport receptor-mediated bidirectional transport of macromolecules such as proteins, RNAs, ribonucleoparticles (RNPs), and ribosomal subunits across the nuclear envelope. Due to its 8-fold rotational symmetry, all subunits are present with 8 copies or multiples thereof.

It is found in the cytoplasm. Its subcellular location is the cytoskeleton. The protein resides in the nucleus. The protein localises to the nuclear pore complex. Functionally, acts as one of several non-catalytic accessory components of the cytoplasmic dynein complex that are thought to be involved in linking dynein to cargos and to adapter proteins that regulate dynein function. Cytoplasmic dynein 1 acts as a motor for the intracellular retrograde motility of vesicles and organelles along microtubules. May play a role in changing or maintaining the spatial distribution of cytoskeletal structures. Also a component of the nuclear pore complex. The polypeptide is Dynein light chain 1, cytoplasmic (dlc2) (Schizosaccharomyces pombe (strain 972 / ATCC 24843) (Fission yeast)).